The primary structure comprises 450 residues: Probable glycylpeptide N-tetradecanoyltransferase (450 aa).

The segment at 1–28 (MSHGHSHDGAPCGGHHGDDGAGGSRPSV) is disordered. Residues Gln-67, Phe-68, Trp-69, Phe-200, Leu-201, Cys-202, Val-203, Ser-209, Arg-211, Val-212, and Ala-213 each contribute to the tetradecanoyl-CoA site.

The protein belongs to the NMT family.

The protein resides in the cytoplasm. It catalyses the reaction N-terminal glycyl-[protein] + tetradecanoyl-CoA = N-tetradecanoylglycyl-[protein] + CoA + H(+). Functionally, adds a myristoyl group to the N-terminal glycine residue of certain cellular proteins. In Caenorhabditis elegans, this protein is Probable glycylpeptide N-tetradecanoyltransferase (nmt-1).